A 163-amino-acid chain; its full sequence is Peptidyl-prolyl cis-trans isomerase FKBP15-2 (163 aa).

Residues 1–25 form the signal peptide; it reads MASKMSLRYSLFLIFFSLISLQGFA. The PPIase FKBP-type domain maps to 52–140; the sequence is GDTIKVHYRG…IFDTELIAVN (89 aa). The interval 142 to 163 is disordered; sequence KPAGGEEYGGDEDDEGYGNDEL. A compositionally biased stretch (acidic residues) spans 149 to 163; the sequence is YGGDEDDEGYGNDEL. A Prevents secretion from ER motif is present at residues 160 to 163; that stretch reads NDEL.

It belongs to the FKBP-type PPIase family.

It localises to the endoplasmic reticulum lumen. The enzyme catalyses [protein]-peptidylproline (omega=180) = [protein]-peptidylproline (omega=0). In terms of biological role, PPIases accelerate the folding of proteins. It catalyzes the cis-trans isomerization of proline imidic peptide bonds in oligopeptides. In Arabidopsis thaliana (Mouse-ear cress), this protein is Peptidyl-prolyl cis-trans isomerase FKBP15-2 (FKBP15-2).